Reading from the N-terminus, the 76-residue chain is Acyl carrier protein (76 aa).

The Carrier domain occupies 1–76 (MSIEERVKKI…SAIDYVQNNQ (76 aa)). The residue at position 36 (S36) is an O-(pantetheine 4'-phosphoryl)serine.

The protein belongs to the acyl carrier protein (ACP) family. Post-translationally, 4'-phosphopantetheine is transferred from CoA to a specific serine of apo-ACP by AcpS. This modification is essential for activity because fatty acids are bound in thioester linkage to the sulfhydryl of the prosthetic group.

It localises to the cytoplasm. The protein operates within lipid metabolism; fatty acid biosynthesis. Its function is as follows. Carrier of the growing fatty acid chain in fatty acid biosynthesis. The sequence is that of Acyl carrier protein from Histophilus somni (strain 129Pt) (Haemophilus somnus).